A 416-amino-acid chain; its full sequence is Multifunctional CCA protein (416 aa).

ATP contacts are provided by Gly-8 and Arg-11. Residues Gly-8 and Arg-11 each contribute to the CTP site. Mg(2+) is bound by residues Asp-21 and Asp-23. 3 residues coordinate ATP: Arg-91, Arg-138, and Arg-141. CTP is bound by residues Arg-91, Arg-138, and Arg-141. Residues Thr-229–Phe-331 enclose the HD domain.

The protein belongs to the tRNA nucleotidyltransferase/poly(A) polymerase family. Bacterial CCA-adding enzyme type 1 subfamily. In terms of assembly, monomer. Can also form homodimers and oligomers. Requires Mg(2+) as cofactor. It depends on Ni(2+) as a cofactor.

The catalysed reaction is a tRNA precursor + 2 CTP + ATP = a tRNA with a 3' CCA end + 3 diphosphate. It carries out the reaction a tRNA with a 3' CCA end + 2 CTP + ATP = a tRNA with a 3' CCACCA end + 3 diphosphate. Functionally, catalyzes the addition and repair of the essential 3'-terminal CCA sequence in tRNAs without using a nucleic acid template. Adds these three nucleotides in the order of C, C, and A to the tRNA nucleotide-73, using CTP and ATP as substrates and producing inorganic pyrophosphate. tRNA 3'-terminal CCA addition is required both for tRNA processing and repair. Also involved in tRNA surveillance by mediating tandem CCA addition to generate a CCACCA at the 3' terminus of unstable tRNAs. While stable tRNAs receive only 3'-terminal CCA, unstable tRNAs are marked with CCACCA and rapidly degraded. This Xylella fastidiosa (strain M12) protein is Multifunctional CCA protein.